Reading from the N-terminus, the 916-residue chain is Protein translocase subunit SecA (916 aa).

Residues glutamine 87, 105-109 (GEGKT), and aspartate 507 each bind ATP. Zn(2+) contacts are provided by cysteine 900, cysteine 902, cysteine 911, and histidine 912.

The protein belongs to the SecA family. As to quaternary structure, monomer and homodimer. Part of the essential Sec protein translocation apparatus which comprises SecA, SecYEG and auxiliary proteins SecDF-YajC and YidC. Zn(2+) serves as cofactor.

It localises to the cell inner membrane. The protein resides in the cytoplasm. It carries out the reaction ATP + H2O + cellular proteinSide 1 = ADP + phosphate + cellular proteinSide 2.. Part of the Sec protein translocase complex. Interacts with the SecYEG preprotein conducting channel. Has a central role in coupling the hydrolysis of ATP to the transfer of proteins into and across the cell membrane, serving both as a receptor for the preprotein-SecB complex and as an ATP-driven molecular motor driving the stepwise translocation of polypeptide chains across the membrane. The polypeptide is Protein translocase subunit SecA (Neisseria gonorrhoeae (strain ATCC 700825 / FA 1090)).